The sequence spans 134 residues: Global transcriptional regulator Spx (134 aa).

Cysteine 10 and cysteine 13 are oxidised to a cystine.

Belongs to the ArsC family. Spx subfamily. In terms of assembly, interacts with the C-terminal domain of the alpha subunit of the RNAP.

It is found in the cytoplasm. In terms of biological role, global transcriptional regulator that plays a key role in stress response and exerts either positive or negative regulation of genes. Acts by interacting with the C-terminal domain of the alpha subunit of the RNA polymerase (RNAP). This interaction can enhance binding of RNAP to the promoter region of target genes and stimulate their transcription, or block interaction of RNAP with activator. This is Global transcriptional regulator Spx from Streptococcus pyogenes serotype M3 (strain ATCC BAA-595 / MGAS315).